A 57-amino-acid chain; its full sequence is MSEFDAQRVAERIDIVLDILVADDYHSAIHNLEILKAELLRQVAESTPDIPKAPWEI.

This sequence belongs to the UPF0509 family.

The chain is UPF0509 protein YciZ (yciZ) from Escherichia coli O157:H7.